We begin with the raw amino-acid sequence, 741 residues long: Photosystem I P700 chlorophyll a apoprotein A2 1 (741 aa).

8 helical membrane passes run 46 to 69, 135 to 158, 175 to 199, 273 to 291, 334 to 357, 373 to 399, 421 to 443, and 524 to 542; these read IFAT…FHVA, LYTG…LHLQ, LNHH…HVAI, MAHH…GHMY, LHFQ…QHMY, AALY…IFLV, AIIS…LYVH, and FLVH…LILV. Positions 566 and 575 each coordinate [4Fe-4S] cluster. 2 helical membrane passes run 582–603 and 650–672; these read SFYL…YWHW and LSVW…MFLI. H661, M669, and Y677 together coordinate chlorophyll a. W678 provides a ligand contact to phylloquinone. Residues 714–734 traverse the membrane as a helical segment; that stretch reads VVGLAHFTVGYVLTYAAFLIA.

The protein belongs to the PsaA/PsaB family. As to quaternary structure, the PsaA/B heterodimer binds the P700 chlorophyll special pair and subsequent electron acceptors. PSI consists of a core antenna complex that captures photons, and an electron transfer chain that converts photonic excitation into a charge separation. The cyanobacterial PSI reaction center is composed of one copy each of PsaA,B,C,D,E,F,I,J,K,L,M and X, and forms trimeric complexes. Requires PSI electron transfer chain: 5 chlorophyll a, 1 chlorophyll a', 2 phylloquinones and 3 4Fe-4S clusters. PSI core antenna: 90 chlorophyll a, 22 carotenoids, 3 phospholipids and 1 galactolipid. P700 is a chlorophyll a/chlorophyll a' dimer, A0 is one or more chlorophyll a, A1 is one or both phylloquinones and FX is a shared 4Fe-4S iron-sulfur center. as cofactor.

Its subcellular location is the cellular thylakoid membrane. It carries out the reaction reduced [plastocyanin] + hnu + oxidized [2Fe-2S]-[ferredoxin] = oxidized [plastocyanin] + reduced [2Fe-2S]-[ferredoxin]. Its function is as follows. PsaA and PsaB bind P700, the primary electron donor of photosystem I (PSI), as well as the electron acceptors A0, A1 and FX. PSI is a plastocyanin/cytochrome c6-ferredoxin oxidoreductase, converting photonic excitation into a charge separation, which transfers an electron from the donor P700 chlorophyll pair to the spectroscopically characterized acceptors A0, A1, FX, FA and FB in turn. Oxidized P700 is reduced on the lumenal side of the thylakoid membrane by plastocyanin or cytochrome c6. The sequence is that of Photosystem I P700 chlorophyll a apoprotein A2 1 (psaB1) from Nostoc sp. (strain PCC 7120 / SAG 25.82 / UTEX 2576).